Reading from the N-terminus, the 368-residue chain is Transmembrane protein 26 (368 aa).

Transmembrane regions (helical) follow at residues 4–24 (LVFLNALATRLLFLLHSLVGV), 36–56 (YWLLALLNLLLFLETALTLKF), and 65–85 (FSPAIFLYLISIVPSLWLLEL). An N-linked (GlcNAc...) asparagine glycan is attached at Asn110. A run of 5 helical transmembrane segments spans residues 150 to 170 (QTFLLMLIIGRWLLPIGGGIT), 177 to 197 (LLLMFVGTAADILEFTSETLE), 208 to 228 (VYAILVIWTWSMLQFPLDLAV), 257 to 277 (IGISVFIQDGPFLVVRLILMT), and 281 to 301 (VINQMLVFFAAKNFLVVVLQL). Positions 324-368 (GEHGCRAQTSESGPSQRDWQNESKEGLAIPLRGSPVTSDDSHHTP) are disordered. The segment covering 330-341 (AQTSESGPSQRD) has biased composition (polar residues).

It localises to the membrane. The sequence is that of Transmembrane protein 26 (TMEM26) from Homo sapiens (Human).